The following is a 908-amino-acid chain: Protein translocase subunit SecA (908 aa).

Residues glutamine 90, 108–112, and aspartate 503 each bind ATP; that span reads GEGKT. Low complexity predominate over residues 846-864; sequence AAAAEAPVAPAPQPAAAAP. The interval 846–884 is disordered; that stretch reads AAAAEAPVAPAPQPAAAAPQPTPELVGAEAGEPDPAAWG. Residues cysteine 892, cysteine 894, cysteine 903, and histidine 904 each coordinate Zn(2+).

It belongs to the SecA family. As to quaternary structure, monomer and homodimer. Part of the essential Sec protein translocation apparatus which comprises SecA, SecYEG and auxiliary proteins SecDF-YajC and YidC. Zn(2+) serves as cofactor.

It localises to the cell inner membrane. Its subcellular location is the cytoplasm. The enzyme catalyses ATP + H2O + cellular proteinSide 1 = ADP + phosphate + cellular proteinSide 2.. Functionally, part of the Sec protein translocase complex. Interacts with the SecYEG preprotein conducting channel. Has a central role in coupling the hydrolysis of ATP to the transfer of proteins into and across the cell membrane, serving both as a receptor for the preprotein-SecB complex and as an ATP-driven molecular motor driving the stepwise translocation of polypeptide chains across the membrane. This chain is Protein translocase subunit SecA, found in Cereibacter sphaeroides (strain KD131 / KCTC 12085) (Rhodobacter sphaeroides).